Reading from the N-terminus, the 250-residue chain is Cytochrome c oxidase subunit 2 (250 aa).

Over 1 to 39 the chain is Mitochondrial intermembrane; sequence MFFLINKLVMNFDAPSPWGIYFQDSATPQMEGLNELHDN. A helical transmembrane segment spans residues 40–60; sequence IMYYLVVILFAVGWILLSIVI. At 61-81 the chain is on the mitochondrial matrix side; it reads NYVSTKSPISHKYLNHGTLIE. The chain crosses the membrane as a helical span at residues 82-104; the sequence is LIWTITPAVILILIAFPSFKLLY. Residues 105–250 are Mitochondrial intermembrane-facing; it reads LMDEVSDPSM…EKFLIWLKEQ (146 aa). Cu cation is bound by residues H185, C220, E222, C224, H228, and M231. E222 lines the Mg(2+) pocket.

This sequence belongs to the cytochrome c oxidase subunit 2 family. As to quaternary structure, component of the cytochrome c oxidase (complex IV, CIV), a multisubunit enzyme composed of a catalytic core of 3 subunits and several supernumerary subunits. The complex exists as a monomer or a dimer and forms supercomplexes (SCs) in the inner mitochondrial membrane with ubiquinol-cytochrome c oxidoreductase (cytochrome b-c1 complex, complex III, CIII). Cu cation is required as a cofactor.

The protein resides in the mitochondrion inner membrane. The catalysed reaction is 4 Fe(II)-[cytochrome c] + O2 + 8 H(+)(in) = 4 Fe(III)-[cytochrome c] + 2 H2O + 4 H(+)(out). In terms of biological role, component of the cytochrome c oxidase, the last enzyme in the mitochondrial electron transport chain which drives oxidative phosphorylation. The respiratory chain contains 3 multisubunit complexes succinate dehydrogenase (complex II, CII), ubiquinol-cytochrome c oxidoreductase (cytochrome b-c1 complex, complex III, CIII) and cytochrome c oxidase (complex IV, CIV), that cooperate to transfer electrons derived from NADH and succinate to molecular oxygen, creating an electrochemical gradient over the inner membrane that drives transmembrane transport and the ATP synthase. Cytochrome c oxidase is the component of the respiratory chain that catalyzes the reduction of oxygen to water. Electrons originating from reduced cytochrome c in the intermembrane space (IMS) are transferred via the dinuclear copper A center (CU(A)) of subunit 2 and heme A of subunit 1 to the active site in subunit 1, a binuclear center (BNC) formed by heme A3 and copper B (CU(B)). The BNC reduces molecular oxygen to 2 water molecules using 4 electrons from cytochrome c in the IMS and 4 protons from the mitochondrial matrix. The sequence is that of Cytochrome c oxidase subunit 2 (COII) from Podospora anserina (strain S / ATCC MYA-4624 / DSM 980 / FGSC 10383) (Pleurage anserina).